The chain runs to 434 residues: Serine hydroxymethyltransferase (434 aa).

Residues Leu128 and 132–134 (GHL) each bind (6S)-5,6,7,8-tetrahydrofolate. Lys237 is subject to N6-(pyridoxal phosphate)lysine.

This sequence belongs to the SHMT family. Homodimer. Pyridoxal 5'-phosphate serves as cofactor.

Its subcellular location is the cytoplasm. It carries out the reaction (6R)-5,10-methylene-5,6,7,8-tetrahydrofolate + glycine + H2O = (6S)-5,6,7,8-tetrahydrofolate + L-serine. Its pathway is one-carbon metabolism; tetrahydrofolate interconversion. It functions in the pathway amino-acid biosynthesis; glycine biosynthesis; glycine from L-serine: step 1/1. Catalyzes the reversible interconversion of serine and glycine with tetrahydrofolate (THF) serving as the one-carbon carrier. This reaction serves as the major source of one-carbon groups required for the biosynthesis of purines, thymidylate, methionine, and other important biomolecules. Also exhibits THF-independent aldolase activity toward beta-hydroxyamino acids, producing glycine and aldehydes, via a retro-aldol mechanism. The polypeptide is Serine hydroxymethyltransferase (Corynebacterium glutamicum (strain R)).